A 515-amino-acid polypeptide reads, in one-letter code: Glucose-6-phosphate 1-dehydrogenase 6, cytoplasmic (515 aa).

Residues 38–45 (GASGDLAK), Arg-73, Tyr-155, and Lys-182 contribute to the NADP(+) site. Residues Lys-182, 212–216 (HYLGK), Glu-250, and Asp-269 contribute to the D-glucose 6-phosphate site. His-274 functions as the Proton acceptor in the catalytic mechanism. Residue Lys-357 participates in NADP(+) binding. The D-glucose 6-phosphate site is built by Lys-360 and Arg-365. NADP(+)-binding residues include Lys-366, Arg-370, and Arg-394. Gln-396 is a binding site for D-glucose 6-phosphate. Residues 402–404 (YMK), 422–424 (DLS), Arg-488, and Trp-510 contribute to the NADP(+) site.

This sequence belongs to the glucose-6-phosphate dehydrogenase family. As to quaternary structure, forms homodimer. As to expression, expressed in roots, leaves, stems, buds, flowers and siliques.

The protein localises to the cytoplasm. The protein resides in the cytosol. It catalyses the reaction D-glucose 6-phosphate + NADP(+) = 6-phospho-D-glucono-1,5-lactone + NADPH + H(+). The protein operates within carbohydrate degradation; pentose phosphate pathway; D-ribulose 5-phosphate from D-glucose 6-phosphate (oxidative stage): step 1/3. Its activity is regulated as follows. Regulated by metabolites. Its function is as follows. Catalyzes the rate-limiting step of the oxidative pentose-phosphate pathway, which represents a route for the dissimilation of carbohydrates besides glycolysis. The main function of this enzyme is to provide reducing power (NADPH) and pentose phosphates for fatty acid and nucleic acid synthesis which are involved in membrane synthesis and cell division. The sequence is that of Glucose-6-phosphate 1-dehydrogenase 6, cytoplasmic from Arabidopsis thaliana (Mouse-ear cress).